A 747-amino-acid chain; its full sequence is Protein tyrosine phosphatase domain-containing protein 1 (747 aa).

The tract at residues 1-36 (MAAGVLPQNEDPYSTLVNSSGHAAHMDENSGRPAPK) is disordered. Residues 11–21 (DPYSTLVNSSG) show a composition bias toward polar residues. Positions 82 to 253 (YSSWVTDNIL…LAPLRNIFSC (172 aa)) constitute a Tyrosine-protein phosphatase domain. Cys190 acts as the Phosphocysteine intermediate in catalysis. Residues Ser392, Ser394, and Ser543 each carry the phosphoserine modification. The interval 549–570 (SSPKAQFPHGQETQDSTDLSEA) is disordered.

Belongs to the protein-tyrosine phosphatase family. Non-receptor class PTPDC1 subfamily.

In terms of biological role, may play roles in cilia formation and/or maintenance. The sequence is that of Protein tyrosine phosphatase domain-containing protein 1 (Ptpdc1) from Mus musculus (Mouse).